The chain runs to 862 residues: Switch 2 (862 aa).

Disordered regions lie at residues 13-43 (PCGSFPSSSSLRVSSTQELEPSRKPPKSSLS) and 58-95 (KHESKISKTQVEDFDHNEDDHKRNIKFDEEEVDEDDER). Low complexity predominate over residues 16-27 (SFPSSSSLRVSS). Basic and acidic residues predominate over residues 58–84 (KHESKISKTQVEDFDHNEDDHKRNIKF). A compositionally biased stretch (acidic residues) spans 85-95 (DEEEVDEDDER). The 173-residue stretch at 151 to 323 (YNLYKNNHGG…FNLFEWVAPG (173 aa)) folds into the Helicase ATP-binding domain. 164–171 (DDMGLGKT) lines the ATP pocket. The DEAH box motif lies at 274 to 277 (DEAH). A coiled-coil region spans residues 274–294 (DEAHRLKNEKSKLYEACLEIK). Residues 532–685 (ALEKLMASWI…VAGKMETRYF (154 aa)) form the Helicase C-terminal domain. Polar residues predominate over residues 782–793 (TTSTSQRLNGDG). The tract at residues 782-821 (TTSTSQRLNGDGNSADRKKKKRKGCSEEEDMSSSNREQKR) is disordered.

It belongs to the SNF2/RAD54 helicase family.

May be involved in early DNA damage response. Probable chromatin remodeling factor. In Arabidopsis thaliana (Mouse-ear cress), this protein is Switch 2.